The sequence spans 342 residues: Phosphoribosylformylglycinamidine cyclo-ligase (342 aa).

This sequence belongs to the AIR synthase family.

It localises to the cytoplasm. It catalyses the reaction 2-formamido-N(1)-(5-O-phospho-beta-D-ribosyl)acetamidine + ATP = 5-amino-1-(5-phospho-beta-D-ribosyl)imidazole + ADP + phosphate + H(+). The protein operates within purine metabolism; IMP biosynthesis via de novo pathway; 5-amino-1-(5-phospho-D-ribosyl)imidazole from N(2)-formyl-N(1)-(5-phospho-D-ribosyl)glycinamide: step 2/2. The sequence is that of Phosphoribosylformylglycinamidine cyclo-ligase from Staphylococcus aureus (strain USA300).